Here is an 805-residue protein sequence, read N- to C-terminus: Mitochondrial intermediate peptidase (805 aa).

The transit peptide at 1 to 25 directs the protein to the mitochondrion; that stretch reads MIQPLVKASRPRLWVCSDCLLRRTL. Position 578 (His-578) interacts with Zn(2+). Glu-579 is an active-site residue. Residues His-582 and His-585 each coordinate Zn(2+).

The protein belongs to the peptidase M3 family. Requires Zn(2+) as cofactor.

The protein localises to the mitochondrion matrix. It carries out the reaction Release of an N-terminal octapeptide as second stage of processing of some proteins imported into the mitochondrion.. Functionally, cleaves proteins, imported into the mitochondrion, to their mature size. While most mitochondrial precursor proteins are processed to the mature form in one step by mitochondrial processing peptidase (MPP), the sequential cleavage by MIP of an octapeptide after initial processing by MPP is a required step for a subgroup of nuclear-encoded precursor proteins destined for the matrix or the inner membrane. This Neurospora crassa (strain ATCC 24698 / 74-OR23-1A / CBS 708.71 / DSM 1257 / FGSC 987) protein is Mitochondrial intermediate peptidase (oct-1).